The chain runs to 286 residues: MQSISVKAYAKINLGLLITGKRPDGYHTLETVFAPINWYDELTFSPSQEVRMSCTNQDLPCDDSNLCIRAAKALRDFSGVSSGVEIGLAKHIPFGAGLGGGSSDAASTLRVLNRMWNINASSHDLHRIAVGLGADVPYFLESGGLAYAAGIGEELEDLELTLPFSIVTLFPGDHISTVWAYRNFYACFEREIPDLKGLVRSLCQARDTSVLEVFDNDFEPVVFDHYPAVREAKDALVQSGSFFASLSGSGSAVFGLFENDSDAERAAEQLSATYRARFTPASFAMA.

The active site involves lysine 11. 93–103 (PFGAGLGGGSS) is a binding site for ATP. Residue aspartate 135 is part of the active site.

This sequence belongs to the GHMP kinase family. IspE subfamily.

It catalyses the reaction 4-CDP-2-C-methyl-D-erythritol + ATP = 4-CDP-2-C-methyl-D-erythritol 2-phosphate + ADP + H(+). It functions in the pathway isoprenoid biosynthesis; isopentenyl diphosphate biosynthesis via DXP pathway; isopentenyl diphosphate from 1-deoxy-D-xylulose 5-phosphate: step 3/6. In terms of biological role, catalyzes the phosphorylation of the position 2 hydroxy group of 4-diphosphocytidyl-2C-methyl-D-erythritol. The sequence is that of 4-diphosphocytidyl-2-C-methyl-D-erythritol kinase from Prosthecochloris aestuarii (strain DSM 271 / SK 413).